The primary structure comprises 173 residues: ATP-dependent protease subunit HslV (173 aa).

Threonine 2 is an active-site residue. Na(+)-binding residues include glycine 158, aspartate 161, and serine 164.

The protein belongs to the peptidase T1B family. HslV subfamily. A double ring-shaped homohexamer of HslV is capped on each side by a ring-shaped HslU homohexamer. The assembly of the HslU/HslV complex is dependent on binding of ATP.

It is found in the cytoplasm. It catalyses the reaction ATP-dependent cleavage of peptide bonds with broad specificity.. Its activity is regulated as follows. Allosterically activated by HslU binding. Functionally, protease subunit of a proteasome-like degradation complex believed to be a general protein degrading machinery. This chain is ATP-dependent protease subunit HslV, found in Actinobacillus pleuropneumoniae serotype 5b (strain L20).